The following is a 350-amino-acid chain: Protein XRP2 (350 aa).

Over residues 1–10 (MGCFFSKRRK) the composition is skewed to basic residues. Residues 1 to 31 (MGCFFSKRRKADKESRPENEEERPKQYSWDQ) are disordered. Gly-2 is lipidated: N-myristoyl glycine. The S-palmitoyl cysteine moiety is linked to residue Cys-3. The span at 11 to 31 (ADKESRPENEEERPKQYSWDQ) shows a compositional bias: basic and acidic residues. The C-CAP/cofactor C-like domain maps to 24-179 (PKQYSWDQRE…TWSNIHDFTP (156 aa)). Residues 98–99 (GS) and 115–118 (QQFR) each bind GTP.

The protein belongs to the TBCC family. Found in a complex with ARL3, RP2 and UNC119 (or UNC119B); RP2 induces hydrolysis of GTP ARL3 in the complex, leading to the release of UNC119 (or UNC119B). Interacts with ARL3; interaction is direct and stimulated with the activated GTP-bound form of ARL3. Post-translationally, myristoylated on Gly-2; which may be required for membrane targeting. Palmitoylated on Cys-3; which may be required for plasma membrane targeting. Mutation of Cys-3 targets the protein to internal membranes. Ubiquitous. Expressed in the rod and cone photoreceptors, extending from the tips of the outer segment (OS) through the inner segment (IS) and outer nuclear layer (ONL) and into the synaptic terminals of the outer plexiform layer (ONL). Also detected in the bipolar, horizontal and amacrine cells in the inner nuclear layer (INL), extending to the inner plexiform layer (IPL) and though the ganglion cell layer (GCL) and into the nerve fiber layer (NFL) (at protein level).

It is found in the cell membrane. It localises to the cell projection. The protein resides in the cilium. In terms of biological role, acts as a GTPase-activating protein (GAP) involved in trafficking between the Golgi and the ciliary membrane. Involved in localization of proteins, such as NPHP3, to the cilium membrane by inducing hydrolysis of GTP ARL3, leading to the release of UNC119 (or UNC119B). Acts as a GTPase-activating protein (GAP) for tubulin in concert with tubulin-specific chaperone C, but does not enhance tubulin heterodimerization. Acts as a guanine nucleotide dissociation inhibitor towards ADP-ribosylation factor-like proteins. This chain is Protein XRP2 (RP2), found in Homo sapiens (Human).